The chain runs to 366 residues: tRNA/tmRNA (uracil-C(5))-methyltransferase (366 aa).

5 residues coordinate S-adenosyl-L-methionine: Q190, Y218, N223, E239, and D299. C324 (nucleophile) is an active-site residue. E358 functions as the Proton acceptor in the catalytic mechanism.

Belongs to the class I-like SAM-binding methyltransferase superfamily. RNA M5U methyltransferase family. TrmA subfamily.

The enzyme catalyses uridine(54) in tRNA + S-adenosyl-L-methionine = 5-methyluridine(54) in tRNA + S-adenosyl-L-homocysteine + H(+). It carries out the reaction uridine(341) in tmRNA + S-adenosyl-L-methionine = 5-methyluridine(341) in tmRNA + S-adenosyl-L-homocysteine + H(+). In terms of biological role, dual-specificity methyltransferase that catalyzes the formation of 5-methyluridine at position 54 (m5U54) in all tRNAs, and that of position 341 (m5U341) in tmRNA (transfer-mRNA). The polypeptide is tRNA/tmRNA (uracil-C(5))-methyltransferase (Escherichia coli O157:H7).